Consider the following 366-residue polypeptide: 3-beta-hydroxysteroid dehydrogenase (366 aa).

Tyr154 acts as the Proton donor in catalysis.

It belongs to the 3-beta-HSD family.

It carries out the reaction testosterone + NAD(+) = androst-4-ene-3,17-dione + NADH + H(+). The catalysed reaction is testosterone + NADP(+) = androst-4-ene-3,17-dione + NADPH + H(+). Catalyzes the degradation of testosterone into androstenedione. The polypeptide is 3-beta-hydroxysteroid dehydrogenase (Mycolicibacterium neoaurum (Mycobacterium neoaurum)).